Consider the following 656-residue polypeptide: Heparan-alpha-glucosaminide N-acetyltransferase (656 aa).

Residues 1–31 (MTGGSSSRRRRAEERSSAAGTERNSRREAVG) form a disordered region. Residues 1 to 185 (MTGGSSSRRR…IIVNENPVDS (185 aa)) lie on the Lumenal, vesicle side of the membrane. N-linked (GlcNAc...) asparagine glycans are attached at residues N137 and N157. A disulfide bond links C146 and C455. A helical membrane pass occupies residues 186–206 (NLPVSIAFLVGLALIVAVSLL). Residues 207-268 (RLLLSLDDVN…NRLRCVDTFR (62 aa)) are Cytoplasmic-facing. Residues 234 to 253 (SELGSPSRADPLSADYQPET) form a disordered region. S238 and S240 each carry phosphoserine. Position 249 is a phosphotyrosine (Y249). A helical membrane pass occupies residues 269-289 (GLALVLMVFVNYGGGKYWYFK). H290 is a catalytic residue. At 290–295 (HSSWNG) the chain is on the lumenal, vesicle side. The chain crosses the membrane as a helical span at residues 296–316 (LTVADLVFPWFVFIMGTSIFL). Over 317 to 338 (SMTSILQRGCSKLKLLGKIVWR) the chain is Cytoplasmic. Residues 339–359 (SFLLICIGVIIVNPNYCLGPL) form a helical membrane-spanning segment. Topologically, residues 360–367 (SWDKVRIP) are lumenal, vesicle. A helical membrane pass occupies residues 368 to 388 (GVLQRLGVTYFVVAVLEFFFW). Residues 389–413 (KPVPDSCTLESSCFSLRDITSSWPQ) lie on the Cytoplasmic side of the membrane. Residues 414–434 (WLTILTLESIWLALTFFLPVP) traverse the membrane as a helical segment. At 435 to 493 (GCPTGYLGPGGIGDLGKYPHCTGGAAGYIDRLLLGDNHLYQHPSSTVLYHTEVAYDPEG) the chain is on the lumenal, vesicle side. The helical transmembrane segment at 494-514 (VLGTINSIVMAFLGVQAGKIL) threads the bilayer. Over 515–522 (VYYKDQTK) the chain is Cytoplasmic. Residues 523 to 543 (AILTRFAAWCCILGLISIVLT) form a helical membrane-spanning segment. At 544–557 (KVSANEGFIPINKN) the chain is on the lumenal, vesicle side. The chain crosses the membrane as a helical span at residues 558–578 (LWSISYVTTLSCFAFFILLIL). Residues 579 to 585 (YPVVDVK) lie on the Cytoplasmic side of the membrane. The chain crosses the membrane as a helical span at residues 586 to 606 (GLWTGTPFFYPGMNSILVYVG). The Lumenal, vesicle segment spans residues 607–627 (HEVLENYFPFQWKLADEQSHK). A helical membrane pass occupies residues 628–648 (EHLIQNIVATALWVLIAYVLY). The interval 641 to 656 (VLIAYVLYKKKLFWKI) is lysosomal targeting region. Residues 649–656 (KKKLFWKI) are Cytoplasmic-facing.

In terms of assembly, homooligomer. Homooligomerization is necessary for enzyme activity. Undergoes intralysosomal proteolytic cleavage; occurs within the end of the first and/or the beginning of the second luminal domain and is essential for the activation of the enzyme. In terms of processing, glycosylated. In terms of tissue distribution, expressed in the retina.

The protein resides in the lysosome membrane. The enzyme catalyses alpha-D-glucosaminyl-[heparan sulfate](n) + acetyl-CoA = N-acetyl-alpha-D-glucosaminyl-[heparan sulfate](n) + CoA + H(+). In terms of biological role, lysosomal acetyltransferase that acetylates the non-reducing terminal alpha-glucosamine residue of intralysosomal heparin or heparan sulfate, converting it into a substrate for luminal alpha-N-acetyl glucosaminidase. This chain is Heparan-alpha-glucosaminide N-acetyltransferase (Hgsnat), found in Mus musculus (Mouse).